The chain runs to 495 residues: UDP-N-acetylmuramoyl-L-alanyl-D-glutamate--2,6-diaminopimelate ligase (495 aa).

Residues Leu-27, Ser-29, and 44–46 (HKA) each bind UDP-N-acetyl-alpha-D-muramoyl-L-alanyl-D-glutamate. 116–122 (GTNGKTT) lines the ATP pocket. Residues Asn-157, 158–159 (TT), Ser-185, Gln-191, and Arg-193 each bind UDP-N-acetyl-alpha-D-muramoyl-L-alanyl-D-glutamate. An N6-carboxylysine modification is found at Lys-225. Residues Arg-390, 414 to 417 (DNPR), Gly-465, and Glu-469 contribute to the meso-2,6-diaminopimelate site. Residues 414-417 (DNPR) carry the Meso-diaminopimelate recognition motif motif.

This sequence belongs to the MurCDEF family. MurE subfamily. Mg(2+) serves as cofactor. Post-translationally, carboxylation is probably crucial for Mg(2+) binding and, consequently, for the gamma-phosphate positioning of ATP.

It is found in the cytoplasm. It catalyses the reaction UDP-N-acetyl-alpha-D-muramoyl-L-alanyl-D-glutamate + meso-2,6-diaminopimelate + ATP = UDP-N-acetyl-alpha-D-muramoyl-L-alanyl-gamma-D-glutamyl-meso-2,6-diaminopimelate + ADP + phosphate + H(+). The protein operates within cell wall biogenesis; peptidoglycan biosynthesis. Its function is as follows. Catalyzes the addition of meso-diaminopimelic acid to the nucleotide precursor UDP-N-acetylmuramoyl-L-alanyl-D-glutamate (UMAG) in the biosynthesis of bacterial cell-wall peptidoglycan. The protein is UDP-N-acetylmuramoyl-L-alanyl-D-glutamate--2,6-diaminopimelate ligase of Pectobacterium atrosepticum (strain SCRI 1043 / ATCC BAA-672) (Erwinia carotovora subsp. atroseptica).